A 1008-amino-acid polypeptide reads, in one-letter code: PAN2-PAN3 deadenylation complex catalytic subunit PAN2 (1008 aa).

WD repeat units lie at residues 29-68 (GQLT…PYSR), 110-149 (PSLG…VTRV), 158-198 (HMAG…FSDV), 200-236 (VQDN…AMAP), and 277-316 (AEVA…SFAE). The linker stretch occupies residues 314-449 (FAEFSAPTAF…TCTEASMSSK (136 aa)). The USP domain maps to 450–755 (KVPRLYRKLE…RTVMMVYAVG (306 aa)). The region spanning 808 to 976 (AIDAEFVVLK…EDSHTALLLY (169 aa)) is the Exonuclease domain. A divalent metal cation contacts are provided by Asp810, Glu812, Asp915, and Asp968.

The protein belongs to the peptidase C19 family. PAN2 subfamily. Forms a heterotrimer with an asymmetric homodimer of the regulatory subunit PAN3 to form the poly(A)-nuclease (PAN) deadenylation complex. A divalent metal cation is required as a cofactor.

The protein localises to the cytoplasm. The catalysed reaction is Exonucleolytic cleavage of poly(A) to 5'-AMP.. Positively regulated by the regulatory subunit PAN3. Catalytic subunit of the poly(A)-nuclease (PAN) deadenylation complex, one of two cytoplasmic mRNA deadenylases involved in mRNA turnover. PAN specifically shortens poly(A) tails of RNA and the activity is stimulated by poly(A)-binding protein PAB1. PAN deadenylation is followed by rapid degradation of the shortened mRNA tails by the CCR4-NOT complex. Deadenylated mRNAs are then degraded by two alternative mechanisms, namely exosome-mediated 3'-5' exonucleolytic degradation, or deadenylation-dependent mRNA decaping and subsequent 5'-3' exonucleolytic degradation by XRN1. May also be involved in post-transcriptional maturation of mRNA poly(A) tails. The sequence is that of PAN2-PAN3 deadenylation complex catalytic subunit PAN2 from Yarrowia lipolytica (strain CLIB 122 / E 150) (Yeast).